We begin with the raw amino-acid sequence, 66 residues long: MKAGIHPNYKKVMVKCACGNEFESGSVKDEVRVEICSACHPFYTGRQKFASAAGRVDKFNKKYGLK.

The Zn(2+) site is built by Cys-16, Cys-18, Cys-36, and Cys-39.

Belongs to the bacterial ribosomal protein bL31 family. Type A subfamily. As to quaternary structure, part of the 50S ribosomal subunit. The cofactor is Zn(2+).

Functionally, binds the 23S rRNA. The protein is Large ribosomal subunit protein bL31 of Anoxybacillus flavithermus (strain DSM 21510 / WK1).